The following is a 274-amino-acid chain: 2,3,4,5-tetrahydropyridine-2,6-dicarboxylate N-succinyltransferase (274 aa).

Residues Arg-106 and Asp-143 each coordinate substrate.

It belongs to the transferase hexapeptide repeat family. As to quaternary structure, homotrimer.

Its subcellular location is the cytoplasm. The catalysed reaction is (S)-2,3,4,5-tetrahydrodipicolinate + succinyl-CoA + H2O = (S)-2-succinylamino-6-oxoheptanedioate + CoA. It participates in amino-acid biosynthesis; L-lysine biosynthesis via DAP pathway; LL-2,6-diaminopimelate from (S)-tetrahydrodipicolinate (succinylase route): step 1/3. The polypeptide is 2,3,4,5-tetrahydropyridine-2,6-dicarboxylate N-succinyltransferase (Cupriavidus metallidurans (strain ATCC 43123 / DSM 2839 / NBRC 102507 / CH34) (Ralstonia metallidurans)).